The following is a 180-amino-acid chain: Large ribosomal subunit protein uL6 (180 aa).

Belongs to the universal ribosomal protein uL6 family. As to quaternary structure, part of the 50S ribosomal subunit.

This protein binds to the 23S rRNA, and is important in its secondary structure. It is located near the subunit interface in the base of the L7/L12 stalk, and near the tRNA binding site of the peptidyltransferase center. The sequence is that of Large ribosomal subunit protein uL6 from Clostridium botulinum (strain Alaska E43 / Type E3).